Consider the following 208-residue polypeptide: ATP phosphoribosyltransferase (208 aa).

The protein belongs to the ATP phosphoribosyltransferase family. Short subfamily. As to quaternary structure, heteromultimer composed of HisG and HisZ subunits.

The protein localises to the cytoplasm. The enzyme catalyses 1-(5-phospho-beta-D-ribosyl)-ATP + diphosphate = 5-phospho-alpha-D-ribose 1-diphosphate + ATP. It functions in the pathway amino-acid biosynthesis; L-histidine biosynthesis; L-histidine from 5-phospho-alpha-D-ribose 1-diphosphate: step 1/9. Its function is as follows. Catalyzes the condensation of ATP and 5-phosphoribose 1-diphosphate to form N'-(5'-phosphoribosyl)-ATP (PR-ATP). Has a crucial role in the pathway because the rate of histidine biosynthesis seems to be controlled primarily by regulation of HisG enzymatic activity. This Lactococcus lactis subsp. cremoris (strain MG1363) protein is ATP phosphoribosyltransferase.